The primary structure comprises 391 residues: Phosphoprotein (391 aa).

Thr10, Thr16, and Thr39 each carry phosphothreonine. Ser69 carries the post-translational modification Phosphoserine. Disordered stretches follow at residues Ser82–Thr101 and Pro143–Val208. Phosphothreonine is present on residues Thr91, Thr150, and Thr165. A Phosphoserine modification is found at Ser188. The span at Leu198 to Val208 shows a compositional bias: polar residues. Residues Ala218–Gln245 are a coiled coil. Thr250 carries the post-translational modification Phosphothreonine. The residue at position 257 (Ser257) is a Phosphoserine. Residues Thr258 and Thr282 each carry the phosphothreonine modification. Residues Ser292 and Ser294 each carry the phosphoserine modification. Thr298 carries the phosphothreonine modification. Phosphoserine occurs at positions 301 and 374. Residues Ala343–Ile391 are interaction with the nucleoprotein. The interval Met348–Ile391 is x domain (XD). Position 375 is a phosphothreonine (Thr375).

Belongs to the rubulavirus/avulavirus P protein family. Homotetramer. Interacts (via multimerization domain) with polymerase L; this interaction forms the polymerase L-P complex. Interacts (via N-terminus) with N0 (via Ncore); this interaction allows P to chaperon N0 to avoid N polymerization before encapsidation. Interacts (via C-terminus) with N-RNA template; this interaction positions the polymerase on the template for both transcription and replication. Interacts with host RPS6KB1 kinase; this interaction may play a role in the viral replication and transcription.

It localises to the virion. Functionally, essential cofactor of the RNA polymerase L that plays a central role in the transcription and replication by forming the polymerase complex with RNA polymerase L and recruiting L to the genomic N-RNA template for RNA synthesis. Also plays a central role in the encapsidation of nascent RNA chains by forming the encapsidation complex with the nucleocapsid protein N (N-P complex). Acts as a chaperone for newly synthesized free N protein, so-called N0, allowing encapsidation of nascent RNA chains during replication. The nucleoprotein protein N prevents excessive phosphorylation of P, which leads to down-regulation of viral transcription/ replication. Participates, together with N, in the formation of viral factories (viroplasms), which are large inclusions in the host cytoplasm where replication takes place. This chain is Phosphoprotein (V/P), found in Mumps orthorubulavirus (MuV).